We begin with the raw amino-acid sequence, 261 residues long: Acyl-[acyl-carrier-protein]--UDP-N-acetylglucosamine O-acyltransferase (261 aa).

It belongs to the transferase hexapeptide repeat family. LpxA subfamily. As to quaternary structure, homotrimer.

It localises to the cytoplasm. It catalyses the reaction a (3R)-hydroxyacyl-[ACP] + UDP-N-acetyl-alpha-D-glucosamine = a UDP-3-O-[(3R)-3-hydroxyacyl]-N-acetyl-alpha-D-glucosamine + holo-[ACP]. Its pathway is glycolipid biosynthesis; lipid IV(A) biosynthesis; lipid IV(A) from (3R)-3-hydroxytetradecanoyl-[acyl-carrier-protein] and UDP-N-acetyl-alpha-D-glucosamine: step 1/6. Involved in the biosynthesis of lipid A, a phosphorylated glycolipid that anchors the lipopolysaccharide to the outer membrane of the cell. The protein is Acyl-[acyl-carrier-protein]--UDP-N-acetylglucosamine O-acyltransferase of Paracoccus denitrificans (strain Pd 1222).